The following is a 210-amino-acid chain: Cell division protein SepF (210 aa).

The interval 13–78 is disordered; sequence GFGEPTGYDY…VTSTAMNPPM (66 aa). Acidic residues predominate over residues 22–31; the sequence is YDYDEMEGDD. Residues 47–60 are compositionally biased toward basic and acidic residues; that stretch reads RSEEPHPRPSEPEM. The span at 64–78 shows a compositional bias: polar residues; the sequence is VNTSAVTSTAMNPPM.

This sequence belongs to the SepF family. Homodimer. Interacts with FtsZ.

Its subcellular location is the cytoplasm. Functionally, cell division protein that is part of the divisome complex and is recruited early to the Z-ring. Probably stimulates Z-ring formation, perhaps through the cross-linking of FtsZ protofilaments. Its function overlaps with FtsA. This chain is Cell division protein SepF, found in Cyanothece sp. (strain PCC 7425 / ATCC 29141).